The following is an 842-amino-acid chain: Putative G-type lectin S-receptor-like serine/threonine-protein kinase At1g61610 (842 aa).

An N-terminal signal peptide occupies residues 1-22; that stretch reads MAGFNRNLTLVTTLLIFHQLCS. N-linked (GlcNAc...) asparagine glycosylation is found at N7, N23, N35, N60, N110, N123, N304, N351, and N380. Residues 23 to 443 are Extracellular-facing; the sequence is NVSCSTSNSF…KLGGGKENST (421 aa). The Bulb-type lectin domain maps to 29–150; that stretch reads SNSFTRNHTI…SDRRKWYWES (122 aa). In terms of domain architecture, EGF-like spans 292-331; it reads PSTECEKYNRCGNYSVCDDSKEFDSGKCSCIDGFEPVHQD. 2 disulfide bridges follow: C296-C308 and C302-C319. Residues 350 to 431 enclose the PAN domain; it reads CNQSLVAGQE…GGNSINIRLA (82 aa). 2 disulfides stabilise this stretch: C385/C406 and C389/C395. A glycan (N-linked (GlcNAc...) asparagine) is linked at N441. Residues 444–464 form a helical membrane-spanning segment; the sequence is LWIIVFSVIGAFLLGLCIWIL. At 465-842 the chain is on the cytoplasmic side; sequence WKFKKSLKAF…DVTFTTIVGR (378 aa). The Protein kinase domain occupies 525-814; it reads FAEENKLGQG…PRQPTFHSFL (290 aa). ATP is bound by residues 531-539 and K553; that span reads LGQGGFGTV. S559 bears the Phosphoserine mark. Positions 614–631 are caM-binding; that stretch reads SKQGSLDWRKRWEVIGGI. D650 (proton acceptor) is an active-site residue. Phosphoserine is present on residues S654 and S667. T684 is modified (phosphothreonine). Phosphoserine is present on residues S728 and S830. Position 837 is a phosphothreonine (T837).

Belongs to the protein kinase superfamily. Ser/Thr protein kinase family.

It localises to the cell membrane. It catalyses the reaction L-seryl-[protein] + ATP = O-phospho-L-seryl-[protein] + ADP + H(+). The enzyme catalyses L-threonyl-[protein] + ATP = O-phospho-L-threonyl-[protein] + ADP + H(+). The polypeptide is Putative G-type lectin S-receptor-like serine/threonine-protein kinase At1g61610 (Arabidopsis thaliana (Mouse-ear cress)).